The following is a 364-amino-acid chain: Spermidine/putrescine import ATP-binding protein PotA (364 aa).

Residues 5 to 235 enclose the ABC transporter domain; that stretch reads LSLKSVSKSY…PVNRFVADFI (231 aa). 37-44 is a binding site for ATP; the sequence is GPSGCGKT.

This sequence belongs to the ABC transporter superfamily. Spermidine/putrescine importer (TC 3.A.1.11.1) family. The complex is composed of two ATP-binding proteins (PotA), two transmembrane proteins (PotB and PotC) and a solute-binding protein (PotD).

It is found in the cell membrane. The catalysed reaction is ATP + H2O + polyamine-[polyamine-binding protein]Side 1 = ADP + phosphate + polyamineSide 2 + [polyamine-binding protein]Side 1.. Its function is as follows. Part of the ABC transporter complex PotABCD involved in spermidine/putrescine import. Responsible for energy coupling to the transport system. This is Spermidine/putrescine import ATP-binding protein PotA from Staphylococcus aureus (strain USA300).